A 453-amino-acid chain; its full sequence is Transcription factor bHLH110 (453 aa).

Disordered stretches follow at residues 1–37 (MDSA…YGAS) and 177–197 (SSLP…RGNF). 2 stretches are compositionally biased toward low complexity: residues 8 to 32 (QLQD…SDPS) and 177 to 192 (SSLP…SSQS). Positions 322 to 371 (VESRSSCPPFKVRKEKLGDRIAALQQLVSPFGKTDTASVLMEAIGYIKFL) constitute a bHLH domain. Positions 386–411 (SRNRPGKASQLVSQSQEGDEEETRDL) are disordered.

As to quaternary structure, homodimer.

The protein localises to the nucleus. This chain is Transcription factor bHLH110 (BHLH110), found in Arabidopsis thaliana (Mouse-ear cress).